The primary structure comprises 196 residues: Flagellar transcriptional regulator FlhC (196 aa).

Residues C138, C141, C158, and C161 each contribute to the Zn(2+) site.

This sequence belongs to the FlhC family. As to quaternary structure, heterohexamer composed of two FlhC and four FlhD subunits. Each FlhC binds a FlhD dimer, forming a heterotrimer, and a hexamer assembles by dimerization of two heterotrimers. The cofactor is Zn(2+).

It is found in the cytoplasm. Functionally, functions in complex with FlhD as a master transcriptional regulator that regulates transcription of several flagellar and non-flagellar operons by binding to their promoter region. Activates expression of class 2 flagellar genes, including fliA, which is a flagellum-specific sigma factor that turns on the class 3 genes. Also regulates genes whose products function in a variety of physiological pathways. The chain is Flagellar transcriptional regulator FlhC from Sodalis glossinidius (strain morsitans).